A 203-amino-acid polypeptide reads, in one-letter code: Small ribosomal subunit protein uS4 (203 aa).

The 62-residue stretch at 93–154 (RRFDNVVFRA…KSKNMDAVTE (62 aa)) folds into the S4 RNA-binding domain.

Belongs to the universal ribosomal protein uS4 family. Part of the 30S ribosomal subunit. Contacts protein S5. The interaction surface between S4 and S5 is involved in control of translational fidelity.

Its function is as follows. One of the primary rRNA binding proteins, it binds directly to 16S rRNA where it nucleates assembly of the body of the 30S subunit. In terms of biological role, with S5 and S12 plays an important role in translational accuracy. The sequence is that of Small ribosomal subunit protein uS4 from Prosthecochloris aestuarii (strain DSM 271 / SK 413).